The sequence spans 566 residues: Proline--tRNA ligase (566 aa).

Belongs to the class-II aminoacyl-tRNA synthetase family. ProS type 1 subfamily. As to quaternary structure, homodimer.

It localises to the cytoplasm. The enzyme catalyses tRNA(Pro) + L-proline + ATP = L-prolyl-tRNA(Pro) + AMP + diphosphate. Its function is as follows. Catalyzes the attachment of proline to tRNA(Pro) in a two-step reaction: proline is first activated by ATP to form Pro-AMP and then transferred to the acceptor end of tRNA(Pro). As ProRS can inadvertently accommodate and process non-cognate amino acids such as alanine and cysteine, to avoid such errors it has two additional distinct editing activities against alanine. One activity is designated as 'pretransfer' editing and involves the tRNA(Pro)-independent hydrolysis of activated Ala-AMP. The other activity is designated 'posttransfer' editing and involves deacylation of mischarged Ala-tRNA(Pro). The misacylated Cys-tRNA(Pro) is not edited by ProRS. The protein is Proline--tRNA ligase of Bacillus cereus (strain AH187).